The following is a 68-amino-acid chain: MANSVAFSSMTWYSPLASDNLYDICVDKVHNRVLCLCHSFGCCTNAVVIWILPSFDEFTPQTLSCKGP.

This is an uncharacterized protein from Dryophytes versicolor (chameleon treefrog).